Consider the following 239-residue polypeptide: Phosphoribosylaminoimidazole-succinocarboxamide synthase (239 aa).

This sequence belongs to the SAICAR synthetase family.

The catalysed reaction is 5-amino-1-(5-phospho-D-ribosyl)imidazole-4-carboxylate + L-aspartate + ATP = (2S)-2-[5-amino-1-(5-phospho-beta-D-ribosyl)imidazole-4-carboxamido]succinate + ADP + phosphate + 2 H(+). It participates in purine metabolism; IMP biosynthesis via de novo pathway; 5-amino-1-(5-phospho-D-ribosyl)imidazole-4-carboxamide from 5-amino-1-(5-phospho-D-ribosyl)imidazole-4-carboxylate: step 1/2. This chain is Phosphoribosylaminoimidazole-succinocarboxamide synthase, found in Bacillus cytotoxicus (strain DSM 22905 / CIP 110041 / 391-98 / NVH 391-98).